Consider the following 43-residue polypeptide: Photosystem I reaction center subunit IX (43 aa).

A helical membrane pass occupies residues 7–27; that stretch reads YLSTAPVLATFWFGLLAGLLI.

This sequence belongs to the PsaJ family.

It is found in the plastid. The protein localises to the chloroplast thylakoid membrane. In terms of biological role, may help in the organization of the PsaE and PsaF subunits. In Gnetum parvifolium (Small-leaved jointfir), this protein is Photosystem I reaction center subunit IX.